The primary structure comprises 344 residues: Arginine N-succinyltransferase (344 aa).

Leu-125 serves as a coordination point for succinyl-CoA. Residue His-229 is the Proton donor of the active site.

Belongs to the arginine N-succinyltransferase family.

It carries out the reaction succinyl-CoA + L-arginine = N(2)-succinyl-L-arginine + CoA + H(+). It functions in the pathway amino-acid degradation; L-arginine degradation via AST pathway; L-glutamate and succinate from L-arginine: step 1/5. In terms of biological role, catalyzes the transfer of succinyl-CoA to arginine to produce N(2)-succinylarginine. The polypeptide is Arginine N-succinyltransferase (Shigella boydii serotype 4 (strain Sb227)).